Consider the following 301-residue polypeptide: Acetylglutamate kinase (301 aa).

Residues 72–73 (GG), Arg-94, and Asn-199 contribute to the substrate site.

It belongs to the acetylglutamate kinase family. ArgB subfamily.

The protein localises to the cytoplasm. It carries out the reaction N-acetyl-L-glutamate + ATP = N-acetyl-L-glutamyl 5-phosphate + ADP. The protein operates within amino-acid biosynthesis; L-arginine biosynthesis; N(2)-acetyl-L-ornithine from L-glutamate: step 2/4. Catalyzes the ATP-dependent phosphorylation of N-acetyl-L-glutamate. This chain is Acetylglutamate kinase, found in Bartonella quintana (strain Toulouse) (Rochalimaea quintana).